An 82-amino-acid chain; its full sequence is Cortexin-1 (82 aa).

The interval 1–20 is disordered; it reads MSAPWTLSPEPLPPSTGPPV. Residues 30–50 form a helical membrane-spanning segment; sequence TVFAFVLCLLVVLVLLMVRCV.

It belongs to the cortexin family. In terms of tissue distribution, neuron specific.

Its subcellular location is the membrane. May mediate extracellular or intracellular signaling of cortical neurons during forebrain development. The protein is Cortexin-1 (Ctxn1) of Rattus norvegicus (Rat).